We begin with the raw amino-acid sequence, 267 residues long: Cell cycle checkpoint protein RAD1 homolog mrt-2 (267 aa).

Belongs to the Rad1 family. As to quaternary structure, probable component of the toroidal 9-1-1 (RAD9-RAD1-HUS1) complex, composed of hpr-9, mrt-2 and hus-1. Interacts with hus-1. Might associate with hpr-9.

It localises to the nucleus. The catalysed reaction is Exonucleolytic cleavage in the 3'- to 5'-direction to yield nucleoside 5'-phosphates.. Its function is as follows. May be a component of the 9-1-1 cell-cycle checkpoint response complex that plays a major role in DNA repair. Promotes DNA double strand break-induced cell cycle arrest and apoptosis, thereby playing a role in genome stability. Also required for telomere length maintenance and germline immortality. May possess 3'-&gt;5' double stranded DNA exonuclease activity. The protein is Cell cycle checkpoint protein RAD1 homolog mrt-2 of Caenorhabditis elegans.